We begin with the raw amino-acid sequence, 245 residues long: Octopine transport system permease protein OccM (245 aa).

The next 5 helical transmembrane spans lie at 12 to 32 (FVAL…SVAL), 57 to 77 (FYIF…IYYG), 96 to 116 (AYWC…AEIM), 163 to 183 (ILMV…ITGI), and 204 to 224 (IYLI…WALW). An ABC transmembrane type-1 domain is found at 19–216 (IPLALQLAVF…ILNFIVARLF (198 aa)).

The protein belongs to the binding-protein-dependent transport system permease family. HisMQ subfamily.

The protein localises to the cell inner membrane. In terms of biological role, component of the octopine active transport system probably consisting of four subunits: Q, M, P and T. This is Octopine transport system permease protein OccM (occM) from Rhizobium radiobacter (Agrobacterium tumefaciens).